We begin with the raw amino-acid sequence, 236 residues long: UPF0280 protein Mlab_0453 (236 aa).

It belongs to the UPF0280 family.

This Methanocorpusculum labreanum (strain ATCC 43576 / DSM 4855 / Z) protein is UPF0280 protein Mlab_0453.